The sequence spans 224 residues: Dimethyl sulfoxide reductase transcriptional activator (224 aa).

One can recognise an HTH bat-type domain in the interval 158-209 (LTDKQREAAAAAVAKGYYATPRGADLSDLATALGISKSAVSQRLSAVESKLA).

Its function is as follows. Involved in activating dmsEABCD gene expression related to dimethyl sulfoxide (DMSO) reductase. Required for anaerobic respiration on dimethyl sulfoxide (DMSO) and trimethylamine N-oxide (TMAO). The chain is Dimethyl sulfoxide reductase transcriptional activator (dmsR) from Halobacterium salinarum (strain ATCC 700922 / JCM 11081 / NRC-1) (Halobacterium halobium).